The sequence spans 106 residues: Flagellar transcriptional regulator FlhD (106 aa).

It belongs to the FlhD family. As to quaternary structure, homodimer; disulfide-linked. Forms a heterohexamer composed of two FlhC and four FlhD subunits. Each FlhC binds a FlhD dimer, forming a heterotrimer, and a hexamer assembles by dimerization of two heterotrimers.

It is found in the cytoplasm. Its function is as follows. Functions in complex with FlhC as a master transcriptional regulator that regulates transcription of several flagellar and non-flagellar operons by binding to their promoter region. Activates expression of class 2 flagellar genes, including fliA, which is a flagellum-specific sigma factor that turns on the class 3 genes. Also regulates genes whose products function in a variety of physiological pathways. In Burkholderia pseudomallei (strain 1710b), this protein is Flagellar transcriptional regulator FlhD.